Reading from the N-terminus, the 425-residue chain is Xylose isomerase (425 aa).

Catalysis depends on residues histidine 101 and aspartate 104. Mg(2+)-binding residues include glutamate 232, glutamate 268, histidine 271, aspartate 296, aspartate 307, aspartate 309, and aspartate 339.

Belongs to the xylose isomerase family. As to quaternary structure, homotetramer. It depends on Mg(2+) as a cofactor.

Its subcellular location is the cytoplasm. The catalysed reaction is alpha-D-xylose = alpha-D-xylulofuranose. The polypeptide is Xylose isomerase (Salmonella paratyphi A (strain ATCC 9150 / SARB42)).